The sequence spans 531 residues: Putative heme-binding protein HQ_1094A (531 aa).

H177 lines the heme pocket. Positions 269–340 are disordered; that stretch reads AHGEAHGHAH…STNTNTQDSE (72 aa). The segment covering 271–281 has biased composition (basic and acidic residues); it reads GEAHGHAHGDS. Over residues 284 to 306 the composition is skewed to gly residues; the sequence is GSGGGGGSSHGQSPGGASAGGSA. A compositionally biased stretch (basic and acidic residues) spans 308 to 317; sequence GTEDADHSDS. Low complexity predominate over residues 318–338; the sequence is RSTTSADTTQSDTSTNTNTQD. Residues 441 to 529 form the ABM domain; sequence GTMGMFYTVK…VLSERPRHVF (89 aa).

In the N-terminal section; belongs to the ChdC family.

The polypeptide is Putative heme-binding protein HQ_1094A (Haloquadratum walsbyi (strain DSM 16790 / HBSQ001)).